Here is a 447-residue protein sequence, read N- to C-terminus: Probable ribonuclease FAU-1 (447 aa).

Positions 424-447 (PEAPGGKICTPEGLTSAPPRSSSA) are disordered.

It belongs to the FAU-1 family.

In terms of biological role, probable RNase involved in rRNA stability through maturation and/or degradation of precursor rRNAs. Binds to RNA in loop regions with AU-rich sequences. The polypeptide is Probable ribonuclease FAU-1 (Pyrobaculum neutrophilum (strain DSM 2338 / JCM 9278 / NBRC 100436 / V24Sta) (Thermoproteus neutrophilus)).